Consider the following 700-residue polypeptide: Polyphosphate kinase (700 aa).

Residue asparagine 45 coordinates ATP. Residues arginine 373 and arginine 403 each contribute to the Mg(2+) site. The region spanning 428–462 (PGMKIHAKLLLITRREEQGFVRYAHIGTGNFHERT) is the PLD phosphodiesterase 1 domain. The active-site Phosphohistidine intermediate is the histidine 433. ATP-binding residues include tyrosine 466, arginine 562, and histidine 590. Residues 585 to 615 (DRFLEHPRVLVVHNDGDPQVFISSADWMERN) form the PLD phosphodiesterase 2 domain.

This sequence belongs to the polyphosphate kinase 1 (PPK1) family. Mg(2+) is required as a cofactor. Post-translationally, an intermediate of this reaction is the autophosphorylated ppk in which a phosphate is covalently linked to a histidine residue through a N-P bond.

It catalyses the reaction [phosphate](n) + ATP = [phosphate](n+1) + ADP. Its function is as follows. Catalyzes the reversible transfer of the terminal phosphate of ATP to form a long-chain polyphosphate (polyP). In Vibrio vulnificus (strain YJ016), this protein is Polyphosphate kinase.